Consider the following 843-residue polypeptide: MSLISAVEDRDIHNIGKTSGGGSRTSSITSSKKSLKHGSKSLRKPKVYQTTGELLSREALYKAKLKYGVYQSPAQSYSIGVSDAHAASDKAANLAHDNQTTVEAYKRMFIDPNATKAASKMGPKVVRNNSITSATSKTSKESQTKRKSKESPGAAASKAYSMTMETTSLSSQTNSRSYSITSASSVLSGASGSFNSTVNPKPKTLNLEKVLVGAEKKAESRIKERWEPEKTNFQYGVKTDEHGNLNQFSFSNEMMNNIMAKVDAPKAQDLQKVKKVSAEKEAKSMKFALGAANAVKDMHPGEDIDKSIALKAQKRETYLSQLTSQQVLTLARANVDRQLDIIEKSDMHRKLFTNMEYNKAAVAVAQSNHQKKTEFHNKINMGGGLFLSPEDITKIASGLISPVLGEVSERAEAQRAMDEEIAERTEAYNKSLNEWETMERSIISNDAKVLTTTANRHQTEKKTSQEKIKASFDALVARMDTKVAERETLLEDTKSKEIEFKKQMQQELKDEKARLDQDLEEWGKKCEQDITEARKEQEELLKPYHDDLANAEAEHKTLVEERDAINAEISRLQDAIVDHKRKISGYGNDLDAQKNRNIREDDKLLELGQTKESLESHLNDDVIILANKAKEQAELSTKEARLKQLEVDSLINERKSELNATDIELKKEKLSLLEAMKDVASARGDDKIDEEKVKKLIGMTSEEYLTQNKSVEKNVEDLPTQLEKIEEGDELKKEEIVGAETKNSGGDGVPVSTAAKEATETSSAVQTKEPEEKISIGNKSSGKEDANDCKSAEHSKEISVSQKAGNNKSLGVSPDSLEHTFSGFSQGSSIEDDQDAISNQEKK.

Position 2 is an N-acetylserine (serine 2). Position 2 is a phosphoserine (serine 2). Residues histidine 13–lysine 44 form a disordered region. Residues lysine 33 to lysine 44 are compositionally biased toward basic residues. 2 positions are modified to phosphoserine: serine 88 and serine 130. The tract at residues lysine 120–asparagine 174 is disordered. 2 stretches are compositionally biased toward polar residues: residues arginine 127–lysine 137 and threonine 163–asparagine 174. Phosphoserine occurs at positions 182, 401, 584, and 710. Positions aspartate 717 to lysine 843 are disordered. Threonine 720 bears the Phosphothreonine mark. Positions serine 752–alanine 764 are enriched in low complexity. Phosphoserine occurs at positions 763 and 775. Over residues serine 781–glutamate 797 the composition is skewed to basic and acidic residues. The span at isoleucine 798–leucine 810 shows a compositional bias: polar residues. A phosphoserine mark is found at serine 816, serine 828, serine 829, and serine 838.

This sequence belongs to the EIS1 family.

The protein resides in the cytoplasmic granule. The protein localises to the cell membrane. In terms of biological role, required for normal formation of eisosomes, large cytoplasmic protein assemblies that localize to specialized domains on plasma membrane and mark the site of endocytosis. The sequence is that of Eisosome protein 1 (EIS1) from Saccharomyces cerevisiae (strain Lalvin EC1118 / Prise de mousse) (Baker's yeast).